A 362-amino-acid chain; its full sequence is Molybdenum import ATP-binding protein ModC (362 aa).

The region spanning 2 to 236 (VSPIEVRLQM…LDLPLAMGDD (235 aa)) is the ABC transporter domain. 34-41 (GPSGSGKT) lines the ATP pocket. The 66-residue stretch at 297–362 (HSSILNRLPV…AQIKAVAVLA (66 aa)) folds into the Mop domain.

This sequence belongs to the ABC transporter superfamily. Molybdate importer (TC 3.A.1.8) family. The complex is composed of two ATP-binding proteins (ModC), two transmembrane proteins (ModB) and a solute-binding protein (ModA).

The protein resides in the cell inner membrane. The enzyme catalyses molybdate(out) + ATP + H2O = molybdate(in) + ADP + phosphate + H(+). Its function is as follows. Part of the ABC transporter complex ModABC involved in molybdenum import. Responsible for energy coupling to the transport system. The protein is Molybdenum import ATP-binding protein ModC of Pseudomonas syringae pv. tomato (strain ATCC BAA-871 / DC3000).